Here is a 434-residue protein sequence, read N- to C-terminus: ATP-sensitive inward rectifier potassium channel 14 (434 aa).

Topologically, residues 1-81 (MGLARALRRL…LSDLFTTCVD (81 aa)) are cytoplasmic. Cys-79 carries the post-translational modification S-nitrosocysteine. A helical transmembrane segment spans residues 82–108 (VRWRWMCLLFSCSFLASWLLFGLTFWL). The Extracellular segment spans residues 109–131 (IASLHGDLAAPPPPAPCFSQVAS). An intramembrane region (helical; Pore-forming) is located at residues 132–148 (FLAAFLFALETQTSIGY). Positions 145–150 (SIGYGV) match the Selectivity filter motif. The Extracellular portion of the chain corresponds to 149 to 157 (GVRSVTEEC). The chain crosses the membrane as a helical span at residues 158-185 (PAAVAAVVLQCIAGCVLDAFVVGAVMAK). At 186–434 (MAKPKKRNET…TPTLALTLPP (249 aa)) the chain is on the cytoplasmic side. The tract at residues 398 to 434 (QEEDEEEDTKEGTSAETPERAASPQALTPTLALTLPP) is disordered. The span at 407 to 416 (KEGTSAETPE) shows a compositional bias: basic and acidic residues. Low complexity predominate over residues 418–434 (AASPQALTPTLALTLPP).

It belongs to the inward rectifier-type potassium channel (TC 1.A.2.1) family. KCNJ14 subfamily.

It localises to the membrane. It catalyses the reaction K(+)(in) = K(+)(out). With respect to regulation, channel activity is regulated by variations of cytosolic pH; channels are activated by alkaline and inhibited by acidic pH values. Inhibited by Ba(2+) and Cs(+) in a voltage-dependent manner; sensitivity to those inhibitors is lower than in other Kir channels. Its function is as follows. Inward rectifier potassium channels are characterized by a greater tendency to allow potassium to flow into the cell rather than out of it. Their voltage dependence is regulated by the concentration of extracellular potassium; as external potassium is raised, the voltage range of the channel opening shifts to more positive voltages. The polypeptide is ATP-sensitive inward rectifier potassium channel 14 (Kcnj14) (Mus musculus (Mouse)).